Consider the following 325-residue polypeptide: 4-hydroxy-3-methylbut-2-enyl diphosphate reductase (325 aa).

Residue Cys13 participates in [4Fe-4S] cluster binding. His42 and His76 together coordinate (2E)-4-hydroxy-3-methylbut-2-enyl diphosphate. Residues His42 and His76 each contribute to the dimethylallyl diphosphate site. Isopentenyl diphosphate-binding residues include His42 and His76. Residue Cys98 participates in [4Fe-4S] cluster binding. His126 is a (2E)-4-hydroxy-3-methylbut-2-enyl diphosphate binding site. Position 126 (His126) interacts with dimethylallyl diphosphate. His126 lines the isopentenyl diphosphate pocket. The Proton donor role is filled by Glu128. Thr169 contributes to the (2E)-4-hydroxy-3-methylbut-2-enyl diphosphate binding site. Residue Cys230 coordinates [4Fe-4S] cluster. 4 residues coordinate (2E)-4-hydroxy-3-methylbut-2-enyl diphosphate: Ser258, Ser259, Asn260, and Ser306. Dimethylallyl diphosphate-binding residues include Ser258, Ser259, Asn260, and Ser306. Isopentenyl diphosphate-binding residues include Ser258, Ser259, Asn260, and Ser306.

This sequence belongs to the IspH family. [4Fe-4S] cluster is required as a cofactor.

It catalyses the reaction isopentenyl diphosphate + 2 oxidized [2Fe-2S]-[ferredoxin] + H2O = (2E)-4-hydroxy-3-methylbut-2-enyl diphosphate + 2 reduced [2Fe-2S]-[ferredoxin] + 2 H(+). The enzyme catalyses dimethylallyl diphosphate + 2 oxidized [2Fe-2S]-[ferredoxin] + H2O = (2E)-4-hydroxy-3-methylbut-2-enyl diphosphate + 2 reduced [2Fe-2S]-[ferredoxin] + 2 H(+). Its pathway is isoprenoid biosynthesis; dimethylallyl diphosphate biosynthesis; dimethylallyl diphosphate from (2E)-4-hydroxy-3-methylbutenyl diphosphate: step 1/1. It participates in isoprenoid biosynthesis; isopentenyl diphosphate biosynthesis via DXP pathway; isopentenyl diphosphate from 1-deoxy-D-xylulose 5-phosphate: step 6/6. In terms of biological role, catalyzes the conversion of 1-hydroxy-2-methyl-2-(E)-butenyl 4-diphosphate (HMBPP) into a mixture of isopentenyl diphosphate (IPP) and dimethylallyl diphosphate (DMAPP). Acts in the terminal step of the DOXP/MEP pathway for isoprenoid precursor biosynthesis. The sequence is that of 4-hydroxy-3-methylbut-2-enyl diphosphate reductase from Prosthecochloris aestuarii (strain DSM 271 / SK 413).